We begin with the raw amino-acid sequence, 576 residues long: G protein-coupled receptor kinase 6 (576 aa).

The segment at 1–185 is N-terminal; that stretch reads MELENIVANT…LERQPVTKNT (185 aa). Residues 53–171 form the RGS domain; sequence YHSLCERQPI…LDSIYFNRFL (119 aa). The 263-residue stretch at 186-448 folds into the Protein kinase domain; that stretch reads FRQYRVLGKG…AREVKEHPLF (263 aa). Residues 192–200, Lys-215, and 264–270 contribute to the ATP site; these read LGKGGFGEV and TLMNGGD. The Proton acceptor role is filled by Asp-311. An ATP-binding site is contributed by 315 to 318; sequence ENIL. Positions 449-514 constitute an AGC-kinase C-terminal domain; the sequence is KKLNFKRLGA…GSVSIPWQNE (66 aa). Ser-484 bears the Phosphoserine; by autocatalysis mark. The residue at position 485 (Thr-485) is a Phosphothreonine; by autocatalysis. Residues Cys-561, Cys-562, and Cys-565 are each lipidated (S-palmitoyl cysteine). Phosphoserine occurs at positions 566 and 568.

Belongs to the protein kinase superfamily. AGC Ser/Thr protein kinase family. GPRK subfamily. In terms of assembly, interacts with GIT1. As to expression, widely expressed. Detectable in all brain areas examined.

The protein localises to the membrane. It carries out the reaction [G-protein-coupled receptor] + ATP = [G-protein-coupled receptor]-phosphate + ADP + H(+). In terms of biological role, specifically phosphorylates the activated forms of G protein-coupled receptors. Such receptor phosphorylation initiates beta-arrestin-mediated receptor desensitization, internalization, and signaling events leading to their desensitization. Seems to be involved in the desensitization of D2-like dopamine receptors in striatum and chemokine receptor CXCR4 which is critical for CXCL12-induced cell chemotaxis. Phosphorylates rhodopsin (RHO) (in vitro) and a non G-protein-coupled receptor: LRP6 during Wnt signaling (in vitro). This chain is G protein-coupled receptor kinase 6 (Grk6), found in Rattus norvegicus (Rat).